We begin with the raw amino-acid sequence, 190 residues long: Small ribosomal subunit protein uS4c (190 aa).

The S4 RNA-binding domain occupies 92–152; sequence RLDHVVYRAG…KSPSSAQLPP (61 aa).

Belongs to the universal ribosomal protein uS4 family. In terms of assembly, part of the 30S ribosomal subunit. Contacts protein S5. The interaction surface between S4 and S5 is involved in control of translational fidelity.

The protein localises to the plastid. It localises to the chloroplast. In terms of biological role, one of the primary rRNA binding proteins, it binds directly to 16S rRNA where it nucleates assembly of the body of the 30S subunit. With S5 and S12 plays an important role in translational accuracy. The protein is Small ribosomal subunit protein uS4c (rps4) of Cyanidioschyzon merolae (strain NIES-3377 / 10D) (Unicellular red alga).